A 607-amino-acid polypeptide reads, in one-letter code: UvrABC system protein C (607 aa).

A GIY-YIG domain is found at 12–91 (DSPGVYLYKD…IKRYRPRYNI (80 aa)). The UVR domain maps to 200–235 (ENLIKKLKKEMAIASDNLEFERAAKLRDQILALEKI).

It belongs to the UvrC family. In terms of assembly, interacts with UvrB in an incision complex.

It is found in the cytoplasm. In terms of biological role, the UvrABC repair system catalyzes the recognition and processing of DNA lesions. UvrC both incises the 5' and 3' sides of the lesion. The N-terminal half is responsible for the 3' incision and the C-terminal half is responsible for the 5' incision. The chain is UvrABC system protein C from Carboxydothermus hydrogenoformans (strain ATCC BAA-161 / DSM 6008 / Z-2901).